The primary structure comprises 254 residues: Imidazole glycerol phosphate synthase subunit HisF (254 aa).

Catalysis depends on residues Asp-11 and Asp-130.

This sequence belongs to the HisA/HisF family. In terms of assembly, heterodimer of HisH and HisF.

It localises to the cytoplasm. It carries out the reaction 5-[(5-phospho-1-deoxy-D-ribulos-1-ylimino)methylamino]-1-(5-phospho-beta-D-ribosyl)imidazole-4-carboxamide + L-glutamine = D-erythro-1-(imidazol-4-yl)glycerol 3-phosphate + 5-amino-1-(5-phospho-beta-D-ribosyl)imidazole-4-carboxamide + L-glutamate + H(+). It functions in the pathway amino-acid biosynthesis; L-histidine biosynthesis; L-histidine from 5-phospho-alpha-D-ribose 1-diphosphate: step 5/9. IGPS catalyzes the conversion of PRFAR and glutamine to IGP, AICAR and glutamate. The HisF subunit catalyzes the cyclization activity that produces IGP and AICAR from PRFAR using the ammonia provided by the HisH subunit. The polypeptide is Imidazole glycerol phosphate synthase subunit HisF (Oceanobacillus iheyensis (strain DSM 14371 / CIP 107618 / JCM 11309 / KCTC 3954 / HTE831)).